Consider the following 276-residue polypeptide: Rhomboid protease GlpG (276 aa).

6 helical membrane passes run 94–114, 142–162, 168–188, 193–213, 229–249, and 250–270; these read AGPL…LMQI, ALLH…WYLG, VLGT…SGWA, SGTY…YVWL, LMAF…GMSI, and ANAA…WDTY. S201 acts as the Nucleophile in catalysis. H254 is an active-site residue.

Belongs to the peptidase S54 family.

The protein localises to the cell inner membrane. The enzyme catalyses Cleaves type-1 transmembrane domains using a catalytic dyad composed of serine and histidine that are contributed by different transmembrane domains.. In terms of biological role, rhomboid-type serine protease that catalyzes intramembrane proteolysis. This Pectobacterium atrosepticum (strain SCRI 1043 / ATCC BAA-672) (Erwinia carotovora subsp. atroseptica) protein is Rhomboid protease GlpG.